A 246-amino-acid polypeptide reads, in one-letter code: MGKNKQNGESDNKSEKKNQKNGDSSVDKSDKKNQCKEIVLKVYMHCEGCASQVSHCLRGYDGVEHIKTEIGDNKVVVSGKFDDPLKILRRVQKKFSRNAEMISPKHNPKQDQKEPQQKKESAPEIKTAILRMNMHCEGCVHEIKRGIEKIKGIQSVEPDRSKSTVVVRGVMDPPKLVEKIKKKLGKHAELLSQITEKGKDNNKKNNNKKEESDGNKIFSYPPQYSSQHAYPSQIFSDENVHSCSIM.

Residues 1-31 (MGKNKQNGESDNKSEKKNQKNGDSSVDKSDK) form a disordered region. In terms of domain architecture, HMA 1 spans 35–99 (CKEIVLKVYM…RVQKKFSRNA (65 aa)). Residues Cys46 and Cys49 each contribute to the a metal cation site. Residues 96–122 (SRNAEMISPKHNPKQDQKEPQQKKESA) are disordered. Basic and acidic residues predominate over residues 108–122 (PKQDQKEPQQKKESA). The HMA 2 domain maps to 125-189 (IKTAILRMNM…IKKKLGKHAE (65 aa)). Residues Cys136 and Cys139 each coordinate a metal cation. Positions 191–226 (LSQITEKGKDNNKKNNNKKEESDGNKIFSYPPQYSS) are disordered. A compositionally biased stretch (basic and acidic residues) spans 196 to 214 (EKGKDNNKKNNNKKEESDG). A Cysteine methyl ester modification is found at Cys243. A lipid anchor (S-farnesyl cysteine) is attached at Cys243. The propeptide at 244 to 246 (SIM) is removed in mature form.

It belongs to the HIPP family.

In terms of biological role, heavy-metal-binding protein. In Arabidopsis thaliana (Mouse-ear cress), this protein is Heavy metal-associated isoprenylated plant protein 8.